The primary structure comprises 615 residues: MRNLAALLPALFLLGSSLLPAGTALAQPLHGISMHGTPELPADFRHFPYVNPDVKKGGRISYGVVGTFDSLNPFVLKGMRTTARGVWDPEFGNLLYESLMLRSSDEPFSLYGLLAETVEWDDERSFIQFNINPRAKWSDGKPVTPDDVIFTFSLLKEKGRPPFNSRLDGVAKMEKVGDRGVRFTFNDKANRETPLILASSTPILPKHAIDPEKFEQAGLGPVVGSGPYRIKTLRPGERIIWERNPDYWGKDIPGKVGFDNYDEISVTYFLQVTTMFEAFKKGDIDIYPEGDAINGTSDTSHWGQAYNFPAVHRGDIVKDVFQPRLPTGMFGLVFNTRRATFADEKVREGLSYALDFEWLNRNILGGSFKRTQSYWQNSPLGAYGNAADERELALLGDAAKTMPAELLAGTYAMPTTDGTGADRKVLKLAVDKLKEAGYSIKNGKMSDANGRQLAFEIMTQNPAQERIALAYQRSLNLIGVAMGIRSVDDGQYQARSNSFDYDMIIRSLPSSLSPGMEQLNRWNSLSRDAQGSFNYAGVANPDIDRMIEALLQARSTEDFQAAVRAYDRLLVAGHYIIPLYYIGAQWVARWKYIDRPDMTPISGNQKQTWWDARVQ.

The first 26 residues, M1 to A26, serve as a signal peptide directing secretion.

This sequence belongs to the bacterial solute-binding protein 5 family. In terms of assembly, the complex is composed of one ATP-binding protein (YejF), two transmembrane proteins (YejB and YejE) and a solute-binding protein (YepA).

The protein resides in the periplasm. Functionally, part of the ABC transporter complex YejBEF-YepA involved in the uptake of muropeptides, the breakdown products of cell wall peptidoglycan. The import of muropeptides into the cell enables peptidoglycan recycling, which is vital for cell wall integrity in this bacterium. Probably binds muropeptides. The chain is Peptidoglycan-binding protein YepA from Agrobacterium fabrum (strain C58 / ATCC 33970) (Agrobacterium tumefaciens (strain C58)).